We begin with the raw amino-acid sequence, 424 residues long: Ancylostoma secreted protein (424 aa).

An N-terminal signal peptide occupies residues 1 to 18 (MFSPVIVSVIFTIAFCDA). SCP domains follow at residues 41-177 (LDFH…SCIY) and 242-387 (LSVH…VCQY).

This sequence belongs to the CRISP family.

It localises to the secreted. Its function is as follows. Associated with the transition to parasitism by infective hookworm larvae. The polypeptide is Ancylostoma secreted protein (ASP) (Ancylostoma caninum (Dog hookworm)).